The following is a 216-amino-acid chain: ATP-dependent Clp protease proteolytic subunit (216 aa).

The active-site Nucleophile is the serine 101. Histidine 126 is an active-site residue.

The protein belongs to the peptidase S14 family. In terms of assembly, component of the chloroplastic Clp protease core complex.

The protein localises to the plastid. It localises to the chloroplast stroma. The enzyme catalyses Hydrolysis of proteins to small peptides in the presence of ATP and magnesium. alpha-casein is the usual test substrate. In the absence of ATP, only oligopeptides shorter than five residues are hydrolyzed (such as succinyl-Leu-Tyr-|-NHMec, and Leu-Tyr-Leu-|-Tyr-Trp, in which cleavage of the -Tyr-|-Leu- and -Tyr-|-Trp bonds also occurs).. Cleaves peptides in various proteins in a process that requires ATP hydrolysis. Has a chymotrypsin-like activity. Plays a major role in the degradation of misfolded proteins. The sequence is that of ATP-dependent Clp protease proteolytic subunit from Zea mays (Maize).